The chain runs to 239 residues: Endoglucanase A (239 aa).

A signal peptide spans 1–16 (MKLSMTLSLFAATAMG).

Belongs to the glycosyl hydrolase 12 (cellulase H) family.

It catalyses the reaction Endohydrolysis of (1-&gt;4)-beta-D-glucosidic linkages in cellulose, lichenin and cereal beta-D-glucans.. Its function is as follows. Has carboxylmethylcellulase activity. This is Endoglucanase A (cekA) from Aspergillus kawachii (strain NBRC 4308) (White koji mold).